A 119-amino-acid chain; its full sequence is Large ribosomal subunit protein uL18 (119 aa).

Belongs to the universal ribosomal protein uL18 family. Part of the 50S ribosomal subunit; part of the 5S rRNA/L5/L18/L25 subcomplex. Contacts the 5S and 23S rRNAs.

This is one of the proteins that bind and probably mediate the attachment of the 5S RNA into the large ribosomal subunit, where it forms part of the central protuberance. The protein is Large ribosomal subunit protein uL18 of Borrelia hermsii (strain HS1 / DAH).